We begin with the raw amino-acid sequence, 429 residues long: 3-phosphoshikimate 1-carboxyvinyltransferase (429 aa).

3-phosphoshikimate contacts are provided by lysine 11, serine 12, and arginine 16. Lysine 11 is a phosphoenolpyruvate binding site. Positions 82 and 110 each coordinate phosphoenolpyruvate. Residues serine 155, glutamine 157, aspartate 302, and lysine 329 each coordinate 3-phosphoshikimate. Residue glutamine 157 participates in phosphoenolpyruvate binding. Residue aspartate 302 is the Proton acceptor of the active site. Residues arginine 333 and arginine 385 each coordinate phosphoenolpyruvate.

Belongs to the EPSP synthase family. Monomer.

It localises to the cytoplasm. It catalyses the reaction 3-phosphoshikimate + phosphoenolpyruvate = 5-O-(1-carboxyvinyl)-3-phosphoshikimate + phosphate. The protein operates within metabolic intermediate biosynthesis; chorismate biosynthesis; chorismate from D-erythrose 4-phosphate and phosphoenolpyruvate: step 6/7. Its function is as follows. Catalyzes the transfer of the enolpyruvyl moiety of phosphoenolpyruvate (PEP) to the 5-hydroxyl of shikimate-3-phosphate (S3P) to produce enolpyruvyl shikimate-3-phosphate and inorganic phosphate. The protein is 3-phosphoshikimate 1-carboxyvinyltransferase of Helicobacter acinonychis (strain Sheeba).